A 319-amino-acid chain; its full sequence is Beta-ketoacyl-[acyl-carrier-protein] synthase III (319 aa).

Residues Cys-115 and His-246 contribute to the active site. Positions 247 to 251 are ACP-binding; that stretch reads QANLR. Asn-276 is an active-site residue.

Belongs to the thiolase-like superfamily. FabH family. In terms of assembly, homodimer.

The protein resides in the cytoplasm. The enzyme catalyses malonyl-[ACP] + acetyl-CoA + H(+) = 3-oxobutanoyl-[ACP] + CO2 + CoA. Its pathway is lipid metabolism; fatty acid biosynthesis. Catalyzes the condensation reaction of fatty acid synthesis by the addition to an acyl acceptor of two carbons from malonyl-ACP. Catalyzes the first condensation reaction which initiates fatty acid synthesis and may therefore play a role in governing the total rate of fatty acid production. Possesses both acetoacetyl-ACP synthase and acetyl transacylase activities. Its substrate specificity determines the biosynthesis of branched-chain and/or straight-chain of fatty acids. The polypeptide is Beta-ketoacyl-[acyl-carrier-protein] synthase III (Coxiella burnetii (strain Dugway 5J108-111)).